The following is a 328-amino-acid chain: Formimidoylglutamase (328 aa).

Positions 133, 159, 161, 163, 253, and 255 each coordinate Mn(2+).

The protein belongs to the arginase family. The cofactor is Mn(2+).

It catalyses the reaction N-formimidoyl-L-glutamate + H2O = formamide + L-glutamate. It participates in amino-acid degradation; L-histidine degradation into L-glutamate; L-glutamate from N-formimidoyl-L-glutamate (hydrolase route): step 1/1. Its function is as follows. Catalyzes the conversion of N-formimidoyl-L-glutamate to L-glutamate and formamide. This Streptococcus pyogenes serotype M28 (strain MGAS6180) protein is Formimidoylglutamase.